The primary structure comprises 468 residues: ATP synthase subunit beta (468 aa).

155–162 is a binding site for ATP; sequence GGAGVGKT.

The protein belongs to the ATPase alpha/beta chains family. In terms of assembly, F-type ATPases have 2 components, CF(1) - the catalytic core - and CF(0) - the membrane proton channel. CF(1) has five subunits: alpha(3), beta(3), gamma(1), delta(1), epsilon(1). CF(0) has three main subunits: a(1), b(2) and c(9-12). The alpha and beta chains form an alternating ring which encloses part of the gamma chain. CF(1) is attached to CF(0) by a central stalk formed by the gamma and epsilon chains, while a peripheral stalk is formed by the delta and b chains.

The protein localises to the cell membrane. The catalysed reaction is ATP + H2O + 4 H(+)(in) = ADP + phosphate + 5 H(+)(out). Its function is as follows. Produces ATP from ADP in the presence of a proton gradient across the membrane. The catalytic sites are hosted primarily by the beta subunits. This Streptococcus equi subsp. zooepidemicus (strain H70) protein is ATP synthase subunit beta.